A 166-amino-acid polypeptide reads, in one-letter code: Ribosome biogenesis regulatory protein homolog (166 aa).

S34 and S64 each carry phosphoserine. The disordered stretch occupies residues 144–166 (KEKKLTSKQVRNTSKKIKRSRRH). Basic residues predominate over residues 156–166 (TSKKIKRSRRH).

Belongs to the RRS1 family. Component of a hexameric 5S RNP precursor complex, composed of 5S RNA, rrs1, rpf2, rpl5a/rpl5b, rpl11a/rpl11b and syo1; this complex acts as a precursor for ribosome assembly. Interacts with sad1.

It is found in the nucleus. The protein localises to the nucleolus. Involved in ribosomal large subunit assembly. This Schizosaccharomyces pombe (strain 972 / ATCC 24843) (Fission yeast) protein is Ribosome biogenesis regulatory protein homolog.